The sequence spans 207 residues: Probable RNA 2'-phosphotransferase (207 aa).

The protein belongs to the KptA/TPT1 family.

Functionally, removes the 2'-phosphate from RNA via an intermediate in which the phosphate is ADP-ribosylated by NAD followed by a presumed transesterification to release the RNA and generate ADP-ribose 1''-2''-cyclic phosphate (APPR&gt;P). May function as an ADP-ribosylase. The chain is Probable RNA 2'-phosphotransferase from Methanosarcina mazei (strain ATCC BAA-159 / DSM 3647 / Goe1 / Go1 / JCM 11833 / OCM 88) (Methanosarcina frisia).